A 210-amino-acid polypeptide reads, in one-letter code: Ribosomal RNA small subunit methyltransferase G (210 aa).

Residues glycine 76, leucine 81, 127–128 (VE), and arginine 142 each bind S-adenosyl-L-methionine.

This sequence belongs to the methyltransferase superfamily. RNA methyltransferase RsmG family.

It localises to the cytoplasm. The enzyme catalyses guanosine(527) in 16S rRNA + S-adenosyl-L-methionine = N(7)-methylguanosine(527) in 16S rRNA + S-adenosyl-L-homocysteine. Specifically methylates the N7 position of guanine in position 527 of 16S rRNA. The chain is Ribosomal RNA small subunit methyltransferase G from Vibrio cholerae serotype O1 (strain ATCC 39315 / El Tor Inaba N16961).